A 565-amino-acid polypeptide reads, in one-letter code: Deoxyribodipyrimidine photo-lyase, mitochondrial (565 aa).

The 152-residue stretch at 75–226 (STVMHWFRND…QLKYYHDSCI (152 aa)) folds into the Photolyase/cryptochrome alpha/beta domain. Residues Tyr-326 and 338–342 (TSGLS) contribute to the FAD site. Interaction with DNA stretches follow at residues 384-391 (EVAWRDFY) and 451-452 (NR). 482-484 (DGD) lines the FAD pocket. Gln-514 provides a ligand contact to DNA.

It belongs to the DNA photolyase class-1 family. As to quaternary structure, monomer. The cofactor is FAD. (6R)-5,10-methylene-5,6,7,8-tetrahydrofolate serves as cofactor.

The protein localises to the nucleus. Its subcellular location is the mitochondrion. The catalysed reaction is cyclobutadipyrimidine (in DNA) = 2 pyrimidine residues (in DNA).. Involved in repair of UV radiation-induced DNA damage. Catalyzes the light-dependent monomerization (300-600 nm) of cyclobutyl pyrimidine dimers (in cis-syn configuration), which are formed between adjacent bases on the same DNA strand upon exposure to ultraviolet radiation. The chain is Deoxyribodipyrimidine photo-lyase, mitochondrial (PHR1) from Saccharomyces cerevisiae (strain ATCC 204508 / S288c) (Baker's yeast).